Here is a 277-residue protein sequence, read N- to C-terminus: MEEQIEPIDRVFVQLGPIAIYWYAVLILLGVAVGYFMARRESVKRGLPQETFADLLVWALPISILSARAYYVIFRWEQFADNPISVFYLREGGIAIHGALIGAVVTAIVFAKKRGLSFWKLADVAAPSILIGQAIGRWGNFVNQEVYGAEVTREFLEGMFLPDWIINQMYINGTYYQPTFLYESLWNVLGVVVLLLLRKANLRQGELFLSYVIWYSVGRFVIEGMRLDYLLIGDSLRTAQLLSIILVVAAIALWVYRRLWVKPPRYLNPDAATKQRK.

The next 4 membrane-spanning stretches (helical) occupy residues 18–38 (IAIYWYAVLILLGVAVGYFMA), 54–74 (DLLVWALPISILSARAYYVIF), 91–111 (EGGIAIHGALIGAVVTAIVFA), and 115–135 (GLSFWKLADVAAPSILIGQAI). Residue arginine 137 coordinates a 1,2-diacyl-sn-glycero-3-phospho-(1'-sn-glycerol). A run of 3 helical transmembrane segments spans residues 177–197 (QPTFLYESLWNVLGVVVLLLL), 205–225 (GELFLSYVIWYSVGRFVIEGM), and 236–256 (LRTAQLLSIILVVAAIALWVY).

It belongs to the Lgt family.

It localises to the cell membrane. The catalysed reaction is L-cysteinyl-[prolipoprotein] + a 1,2-diacyl-sn-glycero-3-phospho-(1'-sn-glycerol) = an S-1,2-diacyl-sn-glyceryl-L-cysteinyl-[prolipoprotein] + sn-glycerol 1-phosphate + H(+). The protein operates within protein modification; lipoprotein biosynthesis (diacylglyceryl transfer). Catalyzes the transfer of the diacylglyceryl group from phosphatidylglycerol to the sulfhydryl group of the N-terminal cysteine of a prolipoprotein, the first step in the formation of mature lipoproteins. This is Phosphatidylglycerol--prolipoprotein diacylglyceryl transferase from Shouchella clausii (strain KSM-K16) (Alkalihalobacillus clausii).